The chain runs to 382 residues: Diphosphomevalonate decarboxylase ERG19 (382 aa).

(R)-5-diphosphomevalonate is bound by residues 22-25, Arg-78, 157-162, and Thr-213; these read YWGK and SGSACR.

Belongs to the diphosphomevalonate decarboxylase family. Homodimer.

It carries out the reaction (R)-5-diphosphomevalonate + ATP = isopentenyl diphosphate + ADP + phosphate + CO2. The protein operates within isoprenoid biosynthesis; isopentenyl diphosphate biosynthesis via mevalonate pathway; isopentenyl diphosphate from (R)-mevalonate: step 3/3. Functionally, diphosphomevalonate decarboxylase; part of the second module of ergosterol biosynthesis pathway that includes the middle steps of the pathway. MVD1 converts diphosphomevalonate into isopentenyl diphosphate. The second module is carried out in the vacuole and involves the formation of farnesyl diphosphate, which is also an important intermediate in the biosynthesis of ubiquinone, dolichol, heme and prenylated proteins. Activity by the mevalonate kinase ERG12 (FG05912) first converts mevalonate into 5-phosphomevalonate. 5-phosphomevalonate is then further converted to 5-diphosphomevalonate by the phosphomevalonate kinase ERG8 (FG09764). The diphosphomevalonate decarboxylase ERG19 (FG10424) then produces isopentenyl diphosphate. The isopentenyl-diphosphate delta-isomerase IDI1 (FG09722) then catalyzes the 1,3-allylic rearrangement of the homoallylic substrate isopentenyl (IPP) to its highly electrophilic allylic isomer, dimethylallyl diphosphate (DMAPP). Finally the farnesyl diphosphate synthase ERG20 (FG06784) catalyzes the sequential condensation of isopentenyl pyrophosphate with dimethylallyl pyrophosphate, and then with the resultant geranylpyrophosphate to the ultimate product farnesyl pyrophosphate. This Gibberella zeae (strain ATCC MYA-4620 / CBS 123657 / FGSC 9075 / NRRL 31084 / PH-1) (Wheat head blight fungus) protein is Diphosphomevalonate decarboxylase ERG19.